The sequence spans 399 residues: Long-chain primary alcohol dehydrogenase AdhA (399 aa).

It belongs to the iron-containing alcohol dehydrogenase family. As to quaternary structure, homotetramer. Zn(2+) serves as cofactor.

It carries out the reaction a primary alcohol + NADP(+) = an aldehyde + NADPH + H(+). Its function is as follows. Alcohol dehydrogenase active against primary long-chain alcohols. Pentan-1-ol is the optimum substrate in vitro, but also shows efficient dehydrogenase activity on propanol, hexanol, and ethanol. The chain is Long-chain primary alcohol dehydrogenase AdhA (adhA) from Thermoanaerobacter ethanolicus (Clostridium thermohydrosulfuricum).